A 737-amino-acid chain; its full sequence is MGGCTVKPQLLLLALVLHPWNPCLGADSEKPSSIPTDKLLVITVATKESDGFHRFMQSAKYFNYTVKVLGQGEEWRGGDGINSIGGGQKVRLMKEVMEHYADQDDLVVMFTECFDVIFAGGPEEVLKKFQKANHKVVFAADGILWPDKRLADKYPVVHIGKRYLNSGGFIGYAPYVNRIVQQWNLQDNDDDQLFYTKVYIDPLKREAINITLDHKCKIFQTLNGAVDEVVLKFENGKARAKNTFYETLPVAINGNGPTKILLNYFGNYVPNSWTQDNGCTLCEFDTVDLSAVDVHPNVSIGVFIEQPTPFLPRFLDILLTLDYPKEALKLFIHNKEVYHEKDIKVFFDKAKHEIKTIKIVGPEENLSQAEARNMGMDFCRQDEKCDYYFSVDADVVLTNPRTLKILIEQNRKIIAPLVTRHGKLWSNFWGALSPDGYYARSEDYVDIVQGNRVGVWNVPYMANVYLIKGKTLRSEMNERNYFVRDKLDPDMALCRNAREMGVFMYISNRHEFGRLLSTANYNTSHYNNDLWQIFENPVDWKEKYINRDYSKIFTENIVEQPCPDVFWFPIFSEKACDELVEEMEHYGKWSGGKHHDSRISGGYENVPTDDIHMKQVDLENVWLHFIREFIAPVTLKVFAGYYTKGFALLNFVVKYSPERQRSLRPHHDASTFTINIALNNVGEDFQGGGCKFLRYNCSIESPRKGWSFMHPGRLTHLHEGLPVKNGTRYIAVSFIDP.

A signal peptide spans 1 to 25 (MGGCTVKPQLLLLALVLHPWNPCLG). Asn-63, Asn-209, and Asn-297 each carry an N-linked (GlcNAc...) asparagine glycan. A Phosphothreonine modification is found at Thr-320. Tyr-323 is subject to Phosphotyrosine. N-linked (GlcNAc...) asparagine glycans are attached at residues Asn-365 and Asn-522. The 94-residue stretch at 644 to 737 (KGFALLNFVV…RYIAVSFIDP (94 aa)) folds into the Fe2OG dioxygenase domain. Fe cation-binding residues include His-666 and Asp-668. Asn-696 carries an N-linked (GlcNAc...) asparagine glycan. Lys-704 is subject to N6-succinyllysine. A Fe cation-binding site is contributed by His-718. Asn-725 carries an N-linked (GlcNAc...) asparagine glycan. Arg-728 is a catalytic residue.

In terms of assembly, homodimer. It depends on Fe(2+) as a cofactor. Requires L-ascorbate as cofactor. Highly expressed in pancreas and muscle. Isoform 1 and isoform 2 are expressed in the majority of the examined cell types. Isoform 2 is specifically expressed in skin, lung, dura and aorta.

It localises to the rough endoplasmic reticulum membrane. It catalyses the reaction L-lysyl-[collagen] + 2-oxoglutarate + O2 = (5R)-5-hydroxy-L-lysyl-[collagen] + succinate + CO2. Functionally, forms hydroxylysine residues in -Xaa-Lys-Gly- sequences in collagens. These hydroxylysines serve as sites of attachment for carbohydrate units and are essential for the stability of the intermolecular collagen cross-links. The sequence is that of Procollagen-lysine,2-oxoglutarate 5-dioxygenase 2 from Homo sapiens (Human).